Reading from the N-terminus, the 633-residue chain is MNKKCTIIYATESGTSQEVAEKLSRDLVLYEIKPRLIDVTNYNKLELPMEKIVIFVLSTTGHGEVPDPMKPLWNFLLIKSLPSNSLANTKFAILGLGDSSYTTYNFAAKKLYQRLQSIGGTPLLRRGDADDQHDLGIDYEVEKWSQELISKLLTIYPLSPNFNINNIKNQLNKSKYNIKIDKINENNKEIKYEIPTQFYKSKLKVNKRITVEEWEQDVRHIELDISECKELQVPIKYQSGDVAYVLPKNPIKRVNEFIELLGLHSNWIIESIEPIDKEITQSPTLLKLPITIYDLVRCYFDIMGSPRRYFFELLSHFVTNPIEKERLEFFSSTEGQDDLRTYNQKEKRNYIDVLKEFPSIEIPFEYLFDLIPPIKPRPFSISSSSLLNPNTIHLTVGINTYTTPFRRLFRTGLCSQYFSSFLNDNDNNIVPIFIKESGARLPKSNEIPIIMVGPGTGCAIFRSFMQERLYFKNNSDNNNKLGDALFYFGCRSESKDYYYRDEFESNLEKGIISKLSVAFSRDGKDGKKVYVQQYIENDSDLIWDIINNRNGYFYISGSSGRMPKDVKQSLLTIIKSNLLKNNNNNNNNNNNNNNNNNNNNNNNNNDDENNIDEIVNNYFEKLEVEKRFITETW.

A Flavodoxin-like domain is found at 5–149 (CTIIYATESG…EVEKWSQELI (145 aa)). Residues 11–16 (TESGTS), 58–61 (STTG), and D131 each bind FMN. Positions 196 to 442 (TQFYKSKLKV…FIKESGARLP (247 aa)) constitute an FAD-binding FR-type domain. FAD contacts are provided by residues 377–380 (RPFS) and 412–415 (GLCS). NADP(+) is bound by residues T456, 520 to 521 (SR), 528 to 532 (KVYVQ), and D565. The interval 580 to 610 (KNNNNNNNNNNNNNNNNNNNNNNNNNDDENN) is disordered. Low complexity predominate over residues 581–604 (NNNNNNNNNNNNNNNNNNNNNNNN). An FAD-binding site is contributed by W633.

The protein belongs to the NADPH-dependent diflavin oxidoreductase NDOR1 family. In the N-terminal section; belongs to the flavodoxin family. This sequence in the C-terminal section; belongs to the flavoprotein pyridine nucleotide cytochrome reductase family. FAD serves as cofactor. The cofactor is FMN.

It localises to the cytoplasm. The enzyme catalyses 2 oxidized [2Fe-2S]-[protein] + NADPH = 2 reduced [2Fe-2S]-[protein] + NADP(+) + H(+). Functionally, NADPH-dependent reductase which is a central component of the cytosolic iron-sulfur (Fe-S) protein assembly (CIA) machinery. Transfers electrons from NADPH via its FAD and FMN prosthetic groups to the [2Fe-2S] cluster of the anamorsin/DRE2 homolog, another key component of the CIA machinery. In turn, this reduced cluster provides electrons for assembly of cytosolic iron-sulfur cluster proteins. The sequence is that of NADPH-dependent diflavin oxidoreductase 1 (redC) from Dictyostelium discoideum (Social amoeba).